The primary structure comprises 288 residues: 30 kDa spicule matrix protein (288 aa).

A signal peptide spans 1-20 (MRCFVYVLVCVVASVSYSRA). The region spanning 93 to 163 (ANMYCGQMHP…YTNWEGMVAP (71 aa)) is the C-type lectin domain. A glycan (N-linked (GlcNAc...) asparagine) is linked at Asn-103.

Spines and tube feet.

Matrix protein of the sea urchin embryo spicule. The function of the matrix proteins is to direct crystal growth in certain orientations and inhibit growth in others. The chain is 30 kDa spicule matrix protein (SM30) from Hemicentrotus pulcherrimus (Sea urchin).